Consider the following 424-residue polypeptide: Serine incorporator 5 (424 aa).

Over 1 to 6 the chain is Extracellular; sequence MYALYF. Residues 7–23 traverse the membrane as a helical segment; that stretch reads ILVVVLCCIMMSTTVAH. At 24–52 the chain is on the cytoplasmic side; sequence KMKEHIPFFEDMCKGIKAGDTCEKLVGYS. The helical transmembrane segment at 53-73 threads the bilayer; the sequence is AVYRVCFGMACFFFIFCLLTL. Residues 74–87 lie on the Extracellular side of the membrane; that stretch reads KINNSKSCRAHIHN. Asparagine 76 carries N-linked (GlcNAc...) asparagine glycosylation. The helical transmembrane segment at 88–108 threads the bilayer; sequence GFWFFKLLLLGAMCSGAFFIP. Residues 109–119 lie on the Cytoplasmic side of the membrane; sequence DQDTFLNAWRY. Residues 120–140 traverse the membrane as a helical segment; it reads VGAVGGFLFIGIQLLLLVEFA. Topologically, residues 141-161 are extracellular; that stretch reads HKWNKNWTAGTASNKLWYASL. Asparagine 146 carries N-linked (GlcNAc...) asparagine glycosylation. A helical membrane pass occupies residues 162-182; it reads ALVTLIMYSIATGGLVLMAVF. Residues 183–193 are Cytoplasmic-facing; sequence YTQKDGCMENK. A helical membrane pass occupies residues 194–214; that stretch reads ILLGVNGGLCVLISLVAISPC. The Extracellular segment spans residues 215 to 221; that stretch reads VQNRQPH. Residues 222–242 traverse the membrane as a helical segment; sequence SGLLQSGVISCYVTYLTFSAL. At 243–274 the chain is on the cytoplasmic side; that stretch reads SSKPAEVVLDEHGKNVTICVPDFGQDLYRDEN. A helical transmembrane segment spans residues 275–295; it reads LVTILGTSLLIGCILYSCLTS. At 296–348 the chain is on the extracellular side; sequence TTRSSSDALQGRYAAPELEIARCCFCFSPGGEDTEEQQQGKEGPRVIYDEKKG. A helical membrane pass occupies residues 349 to 369; it reads TVYIYSYFHFVFFLASLYVMM. At 370–391 the chain is on the cytoplasmic side; the sequence is TVTNWFNYESANIESFFSGSWS. A helical membrane pass occupies residues 392-412; sequence IFWVKMASCWICVLLYLCTLV. Residues 413 to 424 are Extracellular-facing; sequence APLCCPTREFSV.

It belongs to the TDE1 family.

The protein resides in the cell membrane. The enzyme catalyses a 1,2-diacyl-sn-glycero-3-phospho-L-serine(in) = a 1,2-diacyl-sn-glycero-3-phospho-L-serine(out). It catalyses the reaction a 1,2-diacyl-sn-glycero-3-phosphocholine(in) = a 1,2-diacyl-sn-glycero-3-phosphocholine(out). It carries out the reaction a 1,2-diacyl-sn-glycero-3-phosphoethanolamine(in) = a 1,2-diacyl-sn-glycero-3-phosphoethanolamine(out). In terms of biological role, restriction factor required to restrict infectivity of gammaretroviruses: acts by inhibiting an early step of viral infection. Impairs the penetration of the viral particle into the cytoplasm. Non-ATP-dependent, non-specific lipid transporter for phosphatidylserine, phosphatidylcholine, and phosphatidylethanolamine. Functions as a scramblase that flips lipids in both directions across the membrane. Phospholipid scrambling results in gammaretroviral surface exposure of phosphatidylserine and loss of membrane asymmetry, which leads to loss of infectivity. Enhances the incorporation of serine into phosphatidylserine and sphingolipids. May play a role in providing serine molecules for the formation of myelin glycosphingolipids in oligodendrocytes. The polypeptide is Serine incorporator 5 (SERINC5) (Macaca fascicularis (Crab-eating macaque)).